We begin with the raw amino-acid sequence, 67 residues long: Photosystem II reaction center protein H (67 aa).

The chain crosses the membrane as a helical span at residues Gly-27–Leu-47.

This sequence belongs to the PsbH family. In terms of assembly, PSII is composed of 1 copy each of membrane proteins PsbA, PsbB, PsbC, PsbD, PsbE, PsbF, PsbH, PsbI, PsbJ, PsbK, PsbL, PsbM, PsbT, PsbX, PsbY, Psb30/Ycf12, peripheral proteins PsbO, CyanoQ (PsbQ), PsbU, PsbV and a large number of cofactors. It forms dimeric complexes.

It is found in the cellular thylakoid membrane. One of the components of the core complex of photosystem II (PSII), required for its stability and/or assembly. PSII is a light-driven water:plastoquinone oxidoreductase that uses light energy to abstract electrons from H(2)O, generating O(2) and a proton gradient subsequently used for ATP formation. It consists of a core antenna complex that captures photons, and an electron transfer chain that converts photonic excitation into a charge separation. The protein is Photosystem II reaction center protein H of Prochlorococcus marinus (strain SARG / CCMP1375 / SS120).